Consider the following 705-residue polypeptide: SPbeta prophage-derived sublancin-168-processing and transport ATP-binding protein SunT (705 aa).

Residues 12–138 enclose the Peptidase C39 domain; sequence QFNSHDCGLA…SKFTNFILEI (127 aa). Residue Cys-18 is part of the active site. A run of 6 helical transmembrane segments spans residues 167-187, 205-225, 281-301, 306-326, 388-408, and 418-438; these read IVFVILLTSLFVVGLAVAGSF, LITITLIFISMVLIRCIFDFV, ANFVTAIIDIILILGLGVILY, ILFLTIILPILLLSCLAILFF, VISNEILKGLIQNSFTIIILW, and SMSLGTLLFINTLAAFLLSSL. The region spanning 168-450 is the ABC transmembrane type-1 domain; sequence VFVILLTSLF…ILSMQSDLQQ (283 aa). Residues 483 to 705 enclose the ABC transporter domain; the sequence is IKTVNLNIGA…SYSENKEYSI (223 aa). Residue 516 to 523 participates in ATP binding; that stretch reads GESGTGKS.

It belongs to the ABC transporter superfamily. SunT family. In terms of assembly, homodimer.

It localises to the cell membrane. SunT (TC 3.A.1.112.4) is required for production of the lantibiotic sublancin-168, probably by both processing the signal peptide and exporting the resulting mature lantibiotic. The protein is SPbeta prophage-derived sublancin-168-processing and transport ATP-binding protein SunT (sunT) of Bacillus subtilis (strain 168).